The primary structure comprises 1055 residues: Sodium/potassium exporting P-type ATPase 1 (1055 aa).

At 1-73 the chain is on the cytoplasmic side; that stretch reads MTPSIGYVDE…GADEKISISK (73 aa). Residues 74–94 traverse the membrane as a helical segment; sequence ILAHQIFNAMVLVLIISLIIA. Over 95-99 the chain is Extracellular; sequence LAIKD. The helical transmembrane segment at 100-120 threads the bilayer; that stretch reads WISGGVIGFVVFINIFVGFIQ. Residues 121–298 lie on the Cytoplasmic side of the membrane; the sequence is ELKAEKTMGS…TNVGTPLQRK (178 aa). Residues 299–319 traverse the membrane as a helical segment; the sequence is LSWLAILLFWVAVLFAIVVMA. Residues 320–328 lie on the Extracellular side of the membrane; sequence SQEMRVNRN. A helical membrane pass occupies residues 329–349; it reads VAIYAICVALSMIPSSLVVVL. Residues 350-789 lie on the Cytoplasmic side of the membrane; sequence TITMAIGAQV…RMSSNIQKFV (440 aa). Asp385 serves as the catalytic 4-aspartylphosphate intermediate. Residues Asp385 and Thr387 each contribute to the Mg(2+) site. Residues Thr387, Glu491, Lys544, Arg586, Thr646, Gly647, Asp648, Arg705, and Lys711 each coordinate ATP. Asp730 is a binding site for Mg(2+). Asn733 is an ATP binding site. The helical transmembrane segment at 790-810 threads the bilayer; sequence LQLLAENVAQALYLMIGLAFI. The Extracellular segment spans residues 811-816; it reads DKSGYS. Residues 817 to 837 form a helical membrane-spanning segment; the sequence is VFPLSPVEVLWIIVVTSCFPA. At 838-866 the chain is on the cytoplasmic side; sequence MGLGQEKASHDILEQPPNATIFTWEVIID. A helical transmembrane segment spans residues 867 to 887; sequence MIAYGFWMAVCCLVCFVCIVY. Residues 888-913 are Extracellular-facing; it reads GKGDGSLGENCNEGSDTGCNLVFRGR. A helical membrane pass occupies residues 914-934; the sequence is SGAFAAFTWCALLLAWECIHL. Residues 935–962 lie on the Cytoplasmic side of the membrane; sequence RLSFFKMRPELENPWWKQLAIDLWDNQF. The chain crosses the membrane as a helical span at residues 963–983; it reads LFWSVMGAIVSVFPVVYIPVI. Topologically, residues 984–990 are extracellular; that stretch reads NNKVFLH. The chain crosses the membrane as a helical span at residues 991-1011; the sequence is APIGYEWGLAVAFTILFLIGA. Over 1012–1055 the chain is Cytoplasmic; the sequence is EGWKWFKRVYYRKSNANNPEYDLERNDPFKEYSSFSKSNTMEIV.

This sequence belongs to the cation transport ATPase (P-type) (TC 3.A.3) family. Type IID subfamily. Mg(2+) serves as cofactor. Post-translationally, the active site is phosphorylated in presence of sodium or potassium and in conditions of higher pH. Not phosphorylated in presence of calcium ions.

The protein localises to the cell membrane. It carries out the reaction Na(+)(in) + ATP + H2O = Na(+)(out) + ADP + phosphate + H(+). The enzyme catalyses K(+)(in) + ATP + H2O = K(+)(out) + ADP + phosphate + H(+). Functionally, catalyzes the hydrolysis of ATP coupled with the export of sodium and potassium from the cell. May be an inefficient potassium exporter. May transport other cations such as lithium. Sodium/potassium efflux ATPases are involved in salt tolerance and maintaining the membrane potential across the plasma membrane in high salinity (Na+) or alkaline (K+) environments. The chain is Sodium/potassium exporting P-type ATPase 1 from Schwanniomyces occidentalis (Yeast).